We begin with the raw amino-acid sequence, 457 residues long: Mesentericin Y105 secretion protein MesE (457 aa).

The chain crosses the membrane as a helical span at residues 22 to 42 (TLIIVPIFLLVVFIVLFSLFA).

The protein belongs to the membrane fusion protein (MFP) (TC 8.A.1) family.

The protein localises to the membrane. Its function is as follows. Involved in the secretion of mesentericin Y105. In Leuconostoc mesenteroides, this protein is Mesentericin Y105 secretion protein MesE (mesE).